Consider the following 621-residue polypeptide: Cystathionine gamma-synthase (621 aa).

N6-(pyridoxal phosphate)lysine is present on Lys-429.

The protein belongs to the trans-sulfuration enzymes family. MET7 subfamily. Both met-3 and met-7 are required to form a functional cystathionine gamma-synthase. Pyridoxal 5'-phosphate serves as cofactor.

The catalysed reaction is O-succinyl-L-homoserine + L-cysteine = L,L-cystathionine + succinate + H(+). Its pathway is amino-acid biosynthesis; L-methionine biosynthesis via de novo pathway; L-cystathionine from O-succinyl-L-homoserine: step 1/1. Functionally, catalyzes the formation of L-cystathionine from O-succinyl-L-homoserine (OSHS) and L-cysteine, via a gamma-replacement reaction. In the absence of thiol, catalyzes gamma-elimination to form 2-oxobutanoate, succinate and ammonia. The protein is Cystathionine gamma-synthase (met-7) of Neurospora crassa (strain ATCC 24698 / 74-OR23-1A / CBS 708.71 / DSM 1257 / FGSC 987).